The chain runs to 440 residues: NADH-quinone oxidoreductase subunit D 1 (440 aa).

This sequence belongs to the complex I 49 kDa subunit family. In terms of assembly, NDH-1 is composed of 14 different subunits. Subunits NuoB, C, D, E, F, and G constitute the peripheral sector of the complex.

It localises to the cell inner membrane. It catalyses the reaction a quinone + NADH + 5 H(+)(in) = a quinol + NAD(+) + 4 H(+)(out). In terms of biological role, NDH-1 shuttles electrons from NADH, via FMN and iron-sulfur (Fe-S) centers, to quinones in the respiratory chain. The immediate electron acceptor for the enzyme in this species is believed to be a menaquinone. Couples the redox reaction to proton translocation (for every two electrons transferred, four hydrogen ions are translocated across the cytoplasmic membrane), and thus conserves the redox energy in a proton gradient. In Chloroherpeton thalassium (strain ATCC 35110 / GB-78), this protein is NADH-quinone oxidoreductase subunit D 1.